A 189-amino-acid chain; its full sequence is GTP cyclohydrolase 1 (189 aa).

Positions 79, 82, and 150 each coordinate Zn(2+).

The protein belongs to the GTP cyclohydrolase I family. As to quaternary structure, homomer.

The catalysed reaction is GTP + H2O = 7,8-dihydroneopterin 3'-triphosphate + formate + H(+). The protein operates within cofactor biosynthesis; 7,8-dihydroneopterin triphosphate biosynthesis; 7,8-dihydroneopterin triphosphate from GTP: step 1/1. The protein is GTP cyclohydrolase 1 of Rickettsia africae (strain ESF-5).